A 450-amino-acid chain; its full sequence is MSRRYFGTDGIRGRANGLITPELALKVGQAAGLVFQRGDHRHRVVIGKDTRLSGYMIENAMVAGFTSVGMDVLLVGPMPTPAVAMLTKSMRADLGVMISASHNMFEDNGIKLFGPLGFKLSDDVEKQIELLLDESLDKKLAASASLGRARRIDGVHDRYIEFAKRTLPRDLSLDGLRVVVDCANGAAYKVVPEALWELGADVISIGVEPDGFNINKECGSTAPEALCRKVREMRADIGIALDGDADRVIMVDERGHVVDGDQLLAVIAQSWKEDGRLAKPGVVATVMSNLGLERFLAAEGIDLVRTSVGDRYVLEQMMKGGYNVGGEASGHIILSDYNTTGDGFVAALQVLAVVQKLRRPVSEVCHRFDPLPQILKNVRYRNGRPLDDAGVQSAIHAGETRLNGHGRLLIRASGTEPVIRVMGEGEDRIMVEEVVDVIVDALGSASAAAA.

Serine 101 acts as the Phosphoserine intermediate in catalysis. 4 residues coordinate Mg(2+): serine 101, aspartate 242, aspartate 244, and aspartate 246. The residue at position 101 (serine 101) is a Phosphoserine.

The protein belongs to the phosphohexose mutase family. The cofactor is Mg(2+). Post-translationally, activated by phosphorylation.

The enzyme catalyses alpha-D-glucosamine 1-phosphate = D-glucosamine 6-phosphate. Catalyzes the conversion of glucosamine-6-phosphate to glucosamine-1-phosphate. This chain is Phosphoglucosamine mutase, found in Rhodopseudomonas palustris (strain BisB5).